A 245-amino-acid polypeptide reads, in one-letter code: Ribonuclease PH (245 aa).

Residues R86 and 124 to 126 each bind phosphate; that span reads GTR.

The protein belongs to the RNase PH family. In terms of assembly, homohexameric ring arranged as a trimer of dimers. It has been suggested that the active form is the dimer which binds tRNA and that the hexameric form protects the substrate recognition loop (approximately residues 65-82) from proteolysis.

The enzyme catalyses tRNA(n+1) + phosphate = tRNA(n) + a ribonucleoside 5'-diphosphate. Phosphorolytic 3'-5' exoribonuclease that plays an important role in tRNA 3'-end maturation. Removes nucleotide residues following the 3'-CCA terminus of tRNAs; can also add nucleotides to the ends of RNA molecules by using nucleoside diphosphates as substrates, but this may not be physiologically important. Probably plays a role in initiation of 16S rRNA degradation (leading to ribosome degradation) during starvation. Plays a role in the secondary pathway of 23S rRNA 3' end maturation. The protein is Ribonuclease PH of Bacillus subtilis (strain 168).